The chain runs to 143 residues: MRVFTQLAVRLLDAILPEPDEPEHLKTGRRGEELAYFFLRKHGYTIVARNFRTPWHKSELDIIGWNGGILCFIEVKTRTTRDIATAEAAVDDTKRNDLRRVARHYLRQCAENTPTRFDIVTVYLDRPKPEITILKSAFLLSGE.

It belongs to the UPF0102 family.

The sequence is that of UPF0102 protein Acid345_3985 from Koribacter versatilis (strain Ellin345).